Reading from the N-terminus, the 229-residue chain is Geodin cluster transcription factor (229 aa).

The segment at residues 12 to 39 (CHACAASKVRCSKEKPTCSRCSKRGTTC) is a DNA-binding region (zn(2)-C6 fungal-type). Disordered stretches follow at residues 50 to 100 (KQLN…PGTT) and 141 to 169 (TANS…RPPT). Composition is skewed to polar residues over residues 51–71 (QLNN…SLAT) and 153–164 (ITSSHNTSSNSP).

The protein resides in the nucleus. Functionally, transcription factor that regulates the expression of the gene cluster that mediates the biosynthesis of geodin, an intermediate in the biosynthesis of other natural products. The chain is Geodin cluster transcription factor from Aspergillus terreus (strain NIH 2624 / FGSC A1156).